Reading from the N-terminus, the 313-residue chain is Probable pyridoxal 5'-phosphate synthase subunit PDX1.2 (313 aa).

Asp42 contacts D-ribose 5-phosphate. Lys99 acts as the Schiff-base intermediate with D-ribose 5-phosphate in catalysis. Gly171 serves as a coordination point for D-ribose 5-phosphate. Arg183 lines the D-glyceraldehyde 3-phosphate pocket. Residues Gly232 and 253–254 (GS) each bind D-ribose 5-phosphate.

The protein belongs to the PdxS/SNZ family.

The catalysed reaction is aldehydo-D-ribose 5-phosphate + D-glyceraldehyde 3-phosphate + L-glutamine = pyridoxal 5'-phosphate + L-glutamate + phosphate + 3 H2O + H(+). Its pathway is cofactor biosynthesis; pyridoxal 5'-phosphate biosynthesis. Functionally, catalyzes the formation of pyridoxal 5'-phosphate from ribose 5-phosphate (RBP), glyceraldehyde 3-phosphate (G3P) and ammonia. The ammonia is provided by PDX2. Can also use ribulose 5-phosphate and dihydroxyacetone phosphate as substrates, resulting from enzyme-catalyzed isomerization of RBP and G3P, respectively. Also plays an indirect role in resistance to singlet oxygen-generating photosensitizers. The polypeptide is Probable pyridoxal 5'-phosphate synthase subunit PDX1.2 (PDX12) (Oryza sativa subsp. japonica (Rice)).